The chain runs to 105 residues: Large ribosomal subunit protein uL24 (105 aa).

It belongs to the universal ribosomal protein uL24 family. In terms of assembly, part of the 50S ribosomal subunit.

In terms of biological role, one of two assembly initiator proteins, it binds directly to the 5'-end of the 23S rRNA, where it nucleates assembly of the 50S subunit. One of the proteins that surrounds the polypeptide exit tunnel on the outside of the subunit. The chain is Large ribosomal subunit protein uL24 from Parvibaculum lavamentivorans (strain DS-1 / DSM 13023 / NCIMB 13966).